The following is a 410-amino-acid chain: MKEELLKRFTKYVKVDTQSNEESTVCPTTPGQMELANILVTELKEIGMQEVTVDEFGYVMATLPSNTTKEVPVIGFLAHLDTATDLTGKNVNPQVHENYDGKDIVLNKDLNVVLSPKQFPELANYKGKTLITTDGTTLLGADDKAGITEIMVAMNYLINHPEIKHGKIRVAFTPDEEIGRGPERFDVEAFGAKYAYTMDGGPLGELEYESFNAAGAKLTFNGNSVHPGTAKNKMINAVKMAMEFDAEIPKEEAPEYTDGYEGFYHLISLNGDVEQAKSYYIIRDFDHLKFVERKTHIASIAEKLAEKYGEGSVELKLNDQYYNMREKIEPVKEIVDIVSAAMRNLDIEPKISPIRGGTDGAQLSYKGLPTPNIFGGGENFHGKFEYVALESMVKATEVIIEVARLFEEKE.

Histidine 79 provides a ligand contact to Zn(2+). Aspartate 81 is an active-site residue. Aspartate 142 provides a ligand contact to Zn(2+). Glutamate 176 functions as the Proton acceptor in the catalytic mechanism. Zn(2+) is bound by residues glutamate 177, aspartate 199, and histidine 381.

It belongs to the peptidase M20B family. Zn(2+) is required as a cofactor.

It is found in the cytoplasm. It carries out the reaction Release of the N-terminal residue from a tripeptide.. Its function is as follows. Cleaves the N-terminal amino acid of tripeptides. This chain is Peptidase T, found in Listeria innocua serovar 6a (strain ATCC BAA-680 / CLIP 11262).